Reading from the N-terminus, the 40-residue chain is Photosystem II reaction center protein L (40 aa).

A helical membrane pass occupies residues 19 to 39; it reads SLYWGLLLIFVLAVLFSNYFF.

Belongs to the PsbL family. PSII is composed of 1 copy each of membrane proteins PsbA, PsbB, PsbC, PsbD, PsbE, PsbF, PsbH, PsbI, PsbJ, PsbK, PsbL, PsbM, PsbT, PsbX, PsbY, PsbZ, Psb30/Ycf12, at least 3 peripheral proteins of the oxygen-evolving complex and a large number of cofactors. It forms dimeric complexes.

It localises to the plastid. It is found in the chloroplast thylakoid membrane. Its function is as follows. One of the components of the core complex of photosystem II (PSII). PSII is a light-driven water:plastoquinone oxidoreductase that uses light energy to abstract electrons from H(2)O, generating O(2) and a proton gradient subsequently used for ATP formation. It consists of a core antenna complex that captures photons, and an electron transfer chain that converts photonic excitation into a charge separation. This subunit is found at the monomer-monomer interface and is required for correct PSII assembly and/or dimerization. The chain is Photosystem II reaction center protein L from Nandina domestica (Heavenly bamboo).